Consider the following 232-residue polypeptide: 5'-methylthioadenosine/S-adenosylhomocysteine nucleosidase (232 aa).

Glu-12 (proton acceptor) is an active-site residue. Residues Gly-78, Ile-152, and 173–174 each bind substrate; that span reads ME. Asp-197 serves as the catalytic Proton donor.

The protein belongs to the PNP/UDP phosphorylase family. MtnN subfamily. Homodimer.

It carries out the reaction S-adenosyl-L-homocysteine + H2O = S-(5-deoxy-D-ribos-5-yl)-L-homocysteine + adenine. The catalysed reaction is S-methyl-5'-thioadenosine + H2O = 5-(methylsulfanyl)-D-ribose + adenine. It catalyses the reaction 5'-deoxyadenosine + H2O = 5-deoxy-D-ribose + adenine. Its pathway is amino-acid biosynthesis; L-methionine biosynthesis via salvage pathway; S-methyl-5-thio-alpha-D-ribose 1-phosphate from S-methyl-5'-thioadenosine (hydrolase route): step 1/2. Its function is as follows. Catalyzes the irreversible cleavage of the glycosidic bond in both 5'-methylthioadenosine (MTA) and S-adenosylhomocysteine (SAH/AdoHcy) to adenine and the corresponding thioribose, 5'-methylthioribose and S-ribosylhomocysteine, respectively. Also cleaves 5'-deoxyadenosine, a toxic by-product of radical S-adenosylmethionine (SAM) enzymes, into 5-deoxyribose and adenine. Thus, is required for in vivo function of the radical SAM enzymes biotin synthase and lipoic acid synthase, that are inhibited by 5'-deoxyadenosine accumulation. This chain is 5'-methylthioadenosine/S-adenosylhomocysteine nucleosidase, found in Salmonella paratyphi A (strain ATCC 9150 / SARB42).